A 364-amino-acid polypeptide reads, in one-letter code: MQDRQKAQDYRAILLADTPLIDVRAPIEFEQGAMPGAINLPLMMDDERAAVGTCYKRQGADAALALGHRLVCGDIRQQRLEAWKAAYQRFPNGYLCCARGGQRSHIVQRWLQETGIDCPLIEGGYKALRQTAIQATWQLAQKPILLIGGCTGSGKTQLVRQQPNGVDLEGLARHRGSSFGRTLNPQLSQASFENKLAVELLKINARQTLKRWVLEDEGRTIGANHLPECLRERMAQAPIAVVEDPFALRLERLREEYFIRMHHDFTHAYGDEAGWQAYSEYLHHGLFAIRRRLGLQRFAELTDTLDRALAEQLSSGSTDGHMAWLVPLLNEYYDPMYRYQLEKKAANIVFRGPWQDVANWLKAQ.

In terms of domain architecture, Rhodanese spans 14 to 137 (LLADTPLIDV…LRQTAIQATW (124 aa)). C97 (S-selanylcysteine intermediate) is an active-site residue.

Belongs to the SelU family. In terms of assembly, monomer.

It catalyses the reaction 5-methylaminomethyl-2-thiouridine(34) in tRNA + selenophosphate + (2E)-geranyl diphosphate + H2O + H(+) = 5-methylaminomethyl-2-selenouridine(34) in tRNA + (2E)-thiogeraniol + phosphate + diphosphate. The catalysed reaction is 5-methylaminomethyl-2-thiouridine(34) in tRNA + (2E)-geranyl diphosphate = 5-methylaminomethyl-S-(2E)-geranyl-thiouridine(34) in tRNA + diphosphate. The enzyme catalyses 5-methylaminomethyl-S-(2E)-geranyl-thiouridine(34) in tRNA + selenophosphate + H(+) = 5-methylaminomethyl-2-(Se-phospho)selenouridine(34) in tRNA + (2E)-thiogeraniol. It carries out the reaction 5-methylaminomethyl-2-(Se-phospho)selenouridine(34) in tRNA + H2O = 5-methylaminomethyl-2-selenouridine(34) in tRNA + phosphate. Its function is as follows. Involved in the post-transcriptional modification of the uridine at the wobble position (U34) of tRNA(Lys), tRNA(Glu) and tRNA(Gln). Catalyzes the conversion of 2-thiouridine (S2U-RNA) to 2-selenouridine (Se2U-RNA). Acts in a two-step process involving geranylation of 2-thiouridine (S2U) to S-geranyl-2-thiouridine (geS2U) and subsequent selenation of the latter derivative to 2-selenouridine (Se2U) in the tRNA chain. This chain is tRNA 2-selenouridine synthase, found in Salmonella dublin (strain CT_02021853).